A 324-amino-acid chain; its full sequence is MSDRPAARPWGKCGSLCRREEIMVAFKGVWTQAFWKAVTAEFLAMLIFVLLSLGSTINWGGKENPLPVDMVLISLCFGLSIATMVQCFGHISGGHINPAVTVAMVCTRKISIAKSVFYIAAQCLGAIIGAGILYLVTPPSVVGGLGVTTVHGNLTAGHGLLVELIITFQLVFTIFASCDSKRTDVTGSIALAIGFSVAIGHLFAINYTGASMNPARSFGPAVIMGNWENHWIYWVGPIIGAVLAGGLYEYVFCPDVELKRRFKEAFSKAAQQTKGSYMEVEDNRSQVETEDLILKPGLVHVIDIDRGDEKKGKDPSGEIAQTQH.

At 1-36 (MSDRPAARPWGKCGSLCRREEIMVAFKGVWTQAFWK) the chain is on the cytoplasmic side. S-palmitoyl cysteine attachment occurs at residues cysteine 13 and cysteine 17. Residues 37–57 (AVTAEFLAMLIFVLLSLGSTI) traverse the membrane as a helical segment. Topologically, residues 58–69 (NWGGKENPLPVD) are extracellular. Residues 70–89 (MVLISLCFGLSIATMVQCFG) form a helical membrane-spanning segment. Residues 90–93 (HISG) are Cytoplasmic-facing. Residues 94–101 (GHINPAVT) constitute an intramembrane region (discontinuously helical). The NPA 1 signature appears at 97–99 (NPA). The Cytoplasmic portion of the chain corresponds to 102–115 (VAMVCTRKISIAKS). At serine 111 the chain carries Phosphoserine; by PKG. Residues 116–136 (VFYIAAQCLGAIIGAGILYLV) form a helical membrane-spanning segment. The Extracellular segment spans residues 137–155 (TPPSVVGGLGVTTVHGNLT). Residue asparagine 153 is glycosylated (N-linked (GlcNAc...) asparagine). Residues 156-176 (AGHGLLVELIITFQLVFTIFA) traverse the membrane as a helical segment. Residues 177–184 (SCDSKRTD) lie on the Cytoplasmic side of the membrane. Serine 180 is modified (phosphoserine; by PKC). A helical membrane pass occupies residues 185 to 205 (VTGSIALAIGFSVAIGHLFAI). N-linked (GlcNAc...) asparagine glycosylation is present at asparagine 206. The Extracellular segment spans residues 206-208 (NYT). The segment at residues 209 to 222 (GASMNPARSFGPAV) is an intramembrane region (discontinuously helical). Residues 213-215 (NPA) carry the NPA 2 motif. Residues 223-231 (IMGNWENHW) lie on the Extracellular side of the membrane. Residues 232–252 (IYWVGPIIGAVLAGGLYEYVF) form a helical membrane-spanning segment. Topologically, residues 253–324 (CPDVELKRRF…PSGEIAQTQH (72 aa)) are cytoplasmic. 2 positions are modified to phosphoserine: serine 276 and serine 285. The residue at position 289 (threonine 289) is a Phosphothreonine. A compositionally biased stretch (basic and acidic residues) spans 305-316 (DRGDEKKGKDPS). The tract at residues 305–324 (DRGDEKKGKDPSGEIAQTQH) is disordered.

The protein belongs to the MIP/aquaporin (TC 1.A.8) family. As to quaternary structure, homotetramer. The tetramers can form oligomeric arrays in membranes. The size of the oligomers differs between tissues and is smaller in skeletal muscle than in brain. Interaction between AQP4 oligomeric arrays in close-by cells can contribute to cell-cell adhesion. Part of a complex containing MLC1, TRPV4, HEPACAM and ATP1B1. In terms of processing, phosphorylation by PKC at Ser-180 reduces conductance by 50%. Phosphorylation by PKG at Ser-111 in response to glutamate increases conductance by 40%. Isoform 2: Palmitoylated on its N-terminal region. Isoform 1: Not palmitoylated. As to expression, not expressed in kidney, Detectable in gastric parietal and brain astroglial cells. The absence of AQP4 in kidney may be critical for the extreme urinary concentration that occurs in this species (up to 5,000 mosmol/kg H(2)O).

The protein resides in the cell membrane. Its subcellular location is the basolateral cell membrane. It is found in the endosome membrane. The protein localises to the sarcolemma. It localises to the cell projection. It catalyses the reaction H2O(in) = H2O(out). Forms a water-specific channel. Plays an important role in brain water homeostasis and in glymphatic solute transport. Required for a normal rate of water exchange across the blood brain interface. Required for normal levels of cerebrospinal fluid influx into the brain cortex and parenchyma along paravascular spaces that surround penetrating arteries, and for normal drainage of interstitial fluid along paravenous drainage pathways. Thereby, it is required for normal clearance of solutes from the brain interstitial fluid, including soluble beta-amyloid peptides derived from APP. Plays a redundant role in urinary water homeostasis and urinary concentrating ability. This is Aquaporin-4 (AQP4) from Dipodomys merriami (Merriam's kangaroo rat).